Consider the following 215-residue polypeptide: Cytochrome b6 (215 aa).

Residues 32–52 form a helical membrane-spanning segment; the sequence is IFYCLGGITLTCFLVQVATGF. Cys-35 provides a ligand contact to heme c. Residues His-86 and His-100 each coordinate heme b. The next 3 membrane-spanning stretches (helical) occupy residues 90–110, 116–136, and 186–206; these read ASMM…TGGF, LTWV…VTGY, and LHTF…FPMI. Residues His-187 and His-202 each contribute to the heme b site.

It belongs to the cytochrome b family. PetB subfamily. In terms of assembly, the 4 large subunits of the cytochrome b6-f complex are cytochrome b6, subunit IV (17 kDa polypeptide, PetD), cytochrome f and the Rieske protein, while the 4 small subunits are PetG, PetL, PetM and PetN. The complex functions as a dimer. Heme b is required as a cofactor. It depends on heme c as a cofactor.

The protein resides in the plastid. The protein localises to the chloroplast thylakoid membrane. Component of the cytochrome b6-f complex, which mediates electron transfer between photosystem II (PSII) and photosystem I (PSI), cyclic electron flow around PSI, and state transitions. This is Cytochrome b6 from Phalaenopsis aphrodite subsp. formosana (Moth orchid).